Reading from the N-terminus, the 159-residue chain is Voltage-dependent N-type calcium channel subunit alpha-1B (159 aa).

A helical membrane pass occupies residues 1-5 (LVTEI). One copy of the IV repeat lies at 1–159 (LVTEIADTDN…LMLNLFVAVI (159 aa)). Topologically, residues 6-13 (ADTDNFIN) are extracellular. Residue N13 is glycosylated (N-linked (GlcNAc...) asparagine). Residues 14–32 (LSFLRLFRAARLIKLLRQG) traverse the membrane as a helical segment. The Cytoplasmic portion of the chain corresponds to 33–51 (YTIRILLWTFVQSFKALPY). Residues 52–71 (VCLLIAMLFFIYAIIGMQVF) traverse the membrane as a helical segment. Residues 72–135 (GNIALNDETS…LTKNECGSDF (64 aa)) lie on the Extracellular side of the membrane. The helical transmembrane segment at 136–155 (AYFYFVSFIFLCSFLMLNLF) threads the bilayer. The Cytoplasmic segment spans residues 156–159 (VAVI).

This sequence belongs to the calcium channel alpha-1 subunit (TC 1.A.1.11) family. CACNA1B subfamily. As to quaternary structure, multisubunit complex consisting of alpha-1, alpha-2, beta and delta subunits in a 1:1:1:1 ratio. The channel activity is directed by the pore-forming and voltage-sensitive alpha-1 subunit. In many cases, this subunit is sufficient to generate voltage-sensitive calcium channel activity. The auxiliary subunits beta and alpha-2/delta linked by a disulfide bridge regulate the channel activity. Interacts with RIMBP2. Post-translationally, phosphorylated in vitro by CaM-kinase II, PKA, PKC and CGPK.

It localises to the membrane. It catalyses the reaction Ca(2+)(in) = Ca(2+)(out). Voltage-sensitive calcium channels (VSCC) mediate the entry of calcium ions into excitable cells and are also involved in a variety of calcium-dependent processes, including muscle contraction, hormone or neurotransmitter release, gene expression, cell motility, cell division and cell death. This alpha-1B subunit gives rise to N-type calcium currents. N-type calcium channels belong to the 'high-voltage activated' (HVA) group. They are involved in pain signaling. Calcium channels containing alpha-1B subunit may play a role in directed migration of immature neurons. Mediates Ca(2+) release probability at hippocampal neuronal soma and synaptic terminals. In Gallus gallus (Chicken), this protein is Voltage-dependent N-type calcium channel subunit alpha-1B (CACNA1B).